Reading from the N-terminus, the 154-residue chain is Telokin (154 aa).

Positions 1–24 are disordered; the sequence is ISGMSGRKASGSSPTSPINANKVE. A compositionally biased stretch (polar residues) spans 10-19; the sequence is SGSSPTSPIN. The Ig-like C2-type domain maps to 42–133; the sequence is PYFTKTILDM…ATCTAELLVE (92 aa). The interval 134-154 is disordered; the sequence is TMGKEGEGEGEGEEDEEEEEE. Residues 141–154 are compositionally biased toward acidic residues; the sequence is GEGEGEEDEEEEEE.

It belongs to the protein kinase superfamily. CAMK Ser/Thr protein kinase family. Binds calmodulin.

Its function is as follows. Corresponds to the C-terminus of smooth muscle myosin light chain kinase. This Meleagris gallopavo (Wild turkey) protein is Telokin.